The following is a 445-amino-acid chain: Eukaryotic translation initiation factor 3 subunit E (445 aa).

The region spanning 230-403 (FFNHVKGRDL…GHVVMGAQPL (174 aa)) is the PCI domain.

It belongs to the eIF-3 subunit E family. In terms of assembly, component of the eukaryotic translation initiation factor 3 (eIF-3) complex.

Its subcellular location is the cytoplasm. Component of the eukaryotic translation initiation factor 3 (eIF-3) complex, which is involved in protein synthesis of a specialized repertoire of mRNAs and, together with other initiation factors, stimulates binding of mRNA and methionyl-tRNAi to the 40S ribosome. The eIF-3 complex specifically targets and initiates translation of a subset of mRNAs involved in cell proliferation. The sequence is that of Eukaryotic translation initiation factor 3 subunit E (eIF3-S6) from Bombyx mori (Silk moth).